Reading from the N-terminus, the 126-residue chain is Glycine cleavage system H protein (126 aa).

One can recognise a Lipoyl-binding domain in the interval 23–104 (KVRVGITDFA…YDEGWMIEII (82 aa)). Lys64 is subject to N6-lipoyllysine.

Belongs to the GcvH family. The glycine cleavage system is composed of four proteins: P, T, L and H. The cofactor is (R)-lipoate.

In terms of biological role, the glycine cleavage system catalyzes the degradation of glycine. The H protein shuttles the methylamine group of glycine from the P protein to the T protein. This chain is Glycine cleavage system H protein, found in Chlorobium phaeobacteroides (strain BS1).